Reading from the N-terminus, the 338-residue chain is 3-dehydroquinate synthase (338 aa).

NAD(+) is bound by residues 58-63, 92-96, 116-117, Lys-129, and Lys-138; these read DGERAK, GTTGD, and TT. Zn(2+) is bound by residues Glu-169, His-229, and His-245.

It belongs to the sugar phosphate cyclases superfamily. Dehydroquinate synthase family. NAD(+) serves as cofactor. Requires Co(2+) as cofactor. Zn(2+) is required as a cofactor.

The protein resides in the cytoplasm. It carries out the reaction 7-phospho-2-dehydro-3-deoxy-D-arabino-heptonate = 3-dehydroquinate + phosphate. It functions in the pathway metabolic intermediate biosynthesis; chorismate biosynthesis; chorismate from D-erythrose 4-phosphate and phosphoenolpyruvate: step 2/7. Functionally, catalyzes the conversion of 3-deoxy-D-arabino-heptulosonate 7-phosphate (DAHP) to dehydroquinate (DHQ). The sequence is that of 3-dehydroquinate synthase from Picrophilus torridus (strain ATCC 700027 / DSM 9790 / JCM 10055 / NBRC 100828 / KAW 2/3).